Consider the following 281-residue polypeptide: MGLYQAKNDEGSDPKSSSKIDDLIENEAEIIRLIKEDGKLLIDNGDGRDIHNIIQEDKLLSVEFNEVLKRFHGEEKSDIPRKEFDEDEDDGYDSNEHHQKTIEVMNTLNHVINKEVIPPENFSHVVGEIYRSSFPRQENFSFLHERLKLKSILVLIPEEYPQENLNFLKLTGIKLYQVGMSGNKEPFVNIPSHLLTKALEIVLNPANQPILIHCNRGKHRTGCLIGCIRKLQNWSLTMIFDEYRRFAFPKARALDQQFIEMYDDDEIKRIASKNNWLPLQW.

The disordered stretch occupies residues 1–20 (MGLYQAKNDEGSDPKSSSKI). Over residues 7-20 (KNDEGSDPKSSSKI) the composition is skewed to basic and acidic residues. Residue S94 is modified to Phosphoserine. In terms of domain architecture, Tyrosine-protein phosphatase spans 121 to 271 (NFSHVVGEIY…YDDDEIKRIA (151 aa)). Residues N189, I190, and H193 each coordinate 1D-myo-inositol hexakisphosphate. The active-site Phosphocysteine intermediate is C214.

Belongs to the protein-tyrosine phosphatase family. Atypical dual-specificity phosphatase Siw14-like subfamily. Monomer.

It is found in the cytoplasm. The catalysed reaction is 5-diphospho-1D-myo-inositol 1,2,3,4,6-pentakisphosphate + H2O = 1D-myo-inositol hexakisphosphate + phosphate + H(+). It carries out the reaction 5-diphospho-1D-myo-inositol 1,3,4,6-tetrakisphosphate + H2O = 1D-myo-inositol 1,3,4,5,6-pentakisphosphate + phosphate + H(+). The enzyme catalyses 3,5-bis(diphospho)-1D-myo-inositol 1,2,4,6-tetrakisphosphate + H2O = 3-diphospho-1D-myo-inositol 1,2,4,5,6-pentakisphosphate + phosphate + 2 H(+). It catalyses the reaction 1,5-bis(diphospho)-1D-myo-inositol 2,3,4,6-tetrakisphosphate + H2O = 1-diphospho-1D-myo-inositol 2,3,4,5,6-pentakisphosphate + phosphate + 2 H(+). The catalysed reaction is 6-diphospho-1D-myo-inositol pentakisphosphate + H2O = 1D-myo-inositol hexakisphosphate + phosphate + H(+). Functionally, selectively cleaves the beta-phosphate at the 5-position of soluble inositol pyrophosphates. Converts 5-diphosphoinositol tetrakisphosphate (5-PP-InsP(4)) into inositol pentakisphosphate (InsP(5)), 5-diphosphoinositol pentakisphosphate (5-PP-IP(5) or 5-InsP(7)) into inositol hexakisphosphate (IP(6) or InsP(6)), and 1,5-bisdiphosphoinositol tetrakisphosphate (1,5-PP-IP(5) or InsP(8)) into 1-diphosphoinositol pentakisphosphate (1-PP-IP(5) or 1-InsP(7)). Also has activity on 1,5-bis-diphosphoinositol 2,3,4,6-tetrakisphosphate (1,5-InsP(8)) and 3,5-InsP(8). Modulates inositol pyrophosphate metabolism that may have an influence in stress response. Plays a role in actin filament organization and endocytosis. Functions as a prion suppressing factor possibly due to its phosphatase activity against inositol pyrophosphates, which are signal transduction molecules involved in prion propagation. The polypeptide is Inositol diphosphatase SIW14 (SIW14) (Saccharomyces cerevisiae (strain ATCC 204508 / S288c) (Baker's yeast)).